The sequence spans 85 residues: Cell division topological specificity factor (85 aa).

It belongs to the MinE family.

Its function is as follows. Prevents the cell division inhibition by proteins MinC and MinD at internal division sites while permitting inhibition at polar sites. This ensures cell division at the proper site by restricting the formation of a division septum at the midpoint of the long axis of the cell. The protein is Cell division topological specificity factor of Xanthomonas campestris pv. campestris (strain 8004).